A 111-amino-acid chain; its full sequence is Putative carnobacteriocin-B2 immunity protein (111 aa).

Could impart immunity to carnobacteriocin-B2 to naturally sensitive host strains. The chain is Putative carnobacteriocin-B2 immunity protein from Carnobacterium maltaromaticum (Carnobacterium piscicola).